The sequence spans 166 residues: Phospholipase A2 inhibitor A4/A5 (166 aa).

Residues 1-19 form the signal peptide; sequence MRLILLSGLLLLGTFLVNG. The C-type lectin domain maps to 46 to 161; that stretch reads LFHAFLTVHK…CDDNLLVVCE (116 aa). 2 disulfide bridges follow: Cys83–Cys160 and Cys138–Cys152. N-linked (GlcNAc...) asparagine glycosylation occurs at Asn122.

It belongs to the alpha-type phospholipase A2 inhibitor family. In terms of assembly, homotrimer; non-covalently linked. As to expression, expressed by the liver.

The protein resides in the secreted. Its function is as follows. This phospholipase A2 inhibitor binds directly phospholipase A2 in the presence or absence of calcium. This is Phospholipase A2 inhibitor A4/A5 from Crotalus durissus terrificus (South American rattlesnake).